The following is a 312-amino-acid chain: L-type lectin-like domain-containing protein C126.08c (312 aa).

Residues M1–A22 form the signal peptide. The Extracellular segment spans residues E23–L280. The L-type lectin-like domain maps to T24–I248. Residues I281–V301 traverse the membrane as a helical segment. Over Q302–L312 the chain is Cytoplasmic.

Its subcellular location is the membrane. It is found in the endoplasmic reticulum. The protein localises to the golgi apparatus. The protein resides in the vacuole. In Schizosaccharomyces pombe (strain 972 / ATCC 24843) (Fission yeast), this protein is L-type lectin-like domain-containing protein C126.08c.